The following is a 488-amino-acid chain: 3-octaprenyl-4-hydroxybenzoate carboxy-lyase (488 aa).

Position 172 (Asn-172) interacts with Mn(2+). Residues 175–177 (IYR), 189–191 (RWL), and 194–195 (RG) each bind prenylated FMN. Glu-238 provides a ligand contact to Mn(2+). The Proton donor role is filled by Asp-287.

It belongs to the UbiD family. As to quaternary structure, homohexamer. Prenylated FMN serves as cofactor. The cofactor is Mn(2+).

It is found in the cell membrane. It carries out the reaction a 4-hydroxy-3-(all-trans-polyprenyl)benzoate + H(+) = a 2-(all-trans-polyprenyl)phenol + CO2. It functions in the pathway cofactor biosynthesis; ubiquinone biosynthesis. Its function is as follows. Catalyzes the decarboxylation of 3-octaprenyl-4-hydroxy benzoate to 2-octaprenylphenol, an intermediate step in ubiquinone biosynthesis. This Hahella chejuensis (strain KCTC 2396) protein is 3-octaprenyl-4-hydroxybenzoate carboxy-lyase.